The chain runs to 84 residues: Beta-cardiotoxin CTX23 (84 aa).

An N-terminal signal peptide occupies residues 1–21 (MKTLLLTLVVVTIVCLDLGYT). Cystine bridges form between Cys24–Cys43, Cys36–Cys61, Cys65–Cys76, and Cys77–Cys82.

This sequence belongs to the three-finger toxin family. Short-chain subfamily. Aminergic toxin sub-subfamily. As to expression, expressed by the venom gland.

It localises to the secreted. Functionally, acts as a beta-blocker by binding to beta-1 and beta-2 adrenergic receptors (ADRB1 and ADRB2). It dose-dependently decreases the heart rate (bradycardia), whereas conventional cardiotoxins increases it. At 100 mg/kg, intraperitoneal injection into mice provokes labored breathing, impaired locomotion, lack of response to external stimuli, and death (after 30 minutes). The protein is Beta-cardiotoxin CTX23 of Ophiophagus hannah (King cobra).